The sequence spans 468 residues: SVGFKAGVKEYKLTYYTPEYQTKDTDILAAFRVTPQPGVPPEEAGAAVAAESSTGTWTTVWTDGLTSLDRYKGRCYRIERVVGEKDQYIAYVAYPLDLFEEGSVTNMFTSIVGNVFGFKALRALRLEDLRIPPAYVKTFQGPPHGIQVERDKLNKYGRPLLGCTIKPKLGLSAKNYGRAVYECLRGGLDFTKDDENVNSQPFMRWRDRFLFCAEALYKAQAETGEIKGHYLNATAGTCEEMIKRAVFARELGVPIVMHDYLTGGFTANTSLAHYCRDNGLLLHIHRAMHAVIDRQKNHGIHFRVLAKALRMSGGDHIHSGTVVGKLEGERDITLGFVDLLRDDFVEQDRSRGIYFTQDWVSLPGVLPVASGGIHVWHMPALTEIFGDDSVLQFGGGTLGHPWGNAPGAVANRVALEACVKARNEGRDLAQEGNQIIREACKWSPELAAACEVWKEIVFNFAAVDVLDK.

An N6,N6,N6-trimethyllysine modification is found at lysine 5. Substrate is bound by residues asparagine 114 and threonine 164. Lysine 166 (proton acceptor) is an active-site residue. Lysine 168 lines the substrate pocket. Lysine 192, aspartate 194, and glutamate 195 together coordinate Mg(2+). The residue at position 192 (lysine 192) is an N6-carboxylysine. The active-site Proton acceptor is the histidine 285. Substrate contacts are provided by arginine 286, histidine 318, and serine 370.

This sequence belongs to the RuBisCO large chain family. Type I subfamily. Heterohexadecamer of 8 large chains and 8 small chains; disulfide-linked. The disulfide link is formed within the large subunit homodimers. Mg(2+) is required as a cofactor. The disulfide bond which can form in the large chain dimeric partners within the hexadecamer appears to be associated with oxidative stress and protein turnover.

It localises to the plastid. The protein localises to the chloroplast. It catalyses the reaction 2 (2R)-3-phosphoglycerate + 2 H(+) = D-ribulose 1,5-bisphosphate + CO2 + H2O. It carries out the reaction D-ribulose 1,5-bisphosphate + O2 = 2-phosphoglycolate + (2R)-3-phosphoglycerate + 2 H(+). Its function is as follows. RuBisCO catalyzes two reactions: the carboxylation of D-ribulose 1,5-bisphosphate, the primary event in carbon dioxide fixation, as well as the oxidative fragmentation of the pentose substrate in the photorespiration process. Both reactions occur simultaneously and in competition at the same active site. This Nolana spathulata (Chilean bell flower) protein is Ribulose bisphosphate carboxylase large chain.